The primary structure comprises 210 residues: Prohead protease (210 aa).

A propeptide spanning residues 1–23 (MTQAAIDYNKLKSAPVHLDAYIK) is cleaved from the precursor. Catalysis depends on residues His-76, Ser-122, and Glu-148. The propeptide occupies 167 to 210 (SMNGHDYTEWRKSFTAISSKAVPAQERNLSELEKLAIALGYVKE).

This sequence belongs to the HK97 prohead protease protein family. In terms of processing, cleaves itself autocatalytically to yield the mature form of the protease.

Its subcellular location is the virion. Its function is as follows. Serine protease involved in capsid assembly and maturation. Cleaves the major capsid protein, the decoration protein, the portal protein to yield mature procapsids competent for DNA packaging. Acts as a trigger for assembly of the capsid protein. The polypeptide is Prohead protease (Escherichia coli (Enterobacteria phage T5)).